We begin with the raw amino-acid sequence, 237 residues long: RING-H2 finger protein ATL57 (237 aa).

A helical transmembrane segment spans residues 51 to 71 (ALTIFILLVALFFMGFFSVYF). The RING-type; atypical zinc finger occupies 140–182 (CVICLSDFEEGETVKVIPHCGHVFHVDCVDTWLSSYVTCPLCR).

It belongs to the RING-type zinc finger family. ATL subfamily.

It is found in the membrane. It carries out the reaction S-ubiquitinyl-[E2 ubiquitin-conjugating enzyme]-L-cysteine + [acceptor protein]-L-lysine = [E2 ubiquitin-conjugating enzyme]-L-cysteine + N(6)-ubiquitinyl-[acceptor protein]-L-lysine.. It participates in protein modification; protein ubiquitination. The sequence is that of RING-H2 finger protein ATL57 (ATL57) from Arabidopsis thaliana (Mouse-ear cress).